Reading from the N-terminus, the 131-residue chain is D-ribose pyranase (131 aa).

The active-site Proton donor is the His-20. Substrate is bound by residues Asp-28, His-98, and 120–122 (YAN).

The protein belongs to the RbsD / FucU family. RbsD subfamily. In terms of assembly, homodecamer.

The protein resides in the cytoplasm. It carries out the reaction beta-D-ribopyranose = beta-D-ribofuranose. The protein operates within carbohydrate metabolism; D-ribose degradation; D-ribose 5-phosphate from beta-D-ribopyranose: step 1/2. Catalyzes the interconversion of beta-pyran and beta-furan forms of D-ribose. The protein is D-ribose pyranase of Laribacter hongkongensis (strain HLHK9).